The chain runs to 121 residues: Chromosome transmission fidelity protein 8 homolog (121 aa).

It belongs to the CTF8 family. As to quaternary structure, component of the CTF18-RFC complex, which consists of CTF18, CTF8, DSCC1, RFC2, RFC3, RFC4 and RFC5. The CTF18-RFC complex does not interact with the Rad9/Rad1/Hus1 complex. The CTF18-RFC complex interacts with POLH. CTF18/CTF8/DSCC1 associate with PCNA. CTF8 exists as a dimer with DSCC1.

It localises to the nucleus. Functionally, chromosome cohesion factor involved in sister chromatid cohesion and fidelity of chromosome transmission. Component of one of the cell nuclear antigen loader complexes, CTF18-replication factor C (CTF18-RFC), which consists of CTF18, CTF8, DSCC1, RFC2, RFC3, RFC4 and RFC5. The CTF18-RFC complex binds to single-stranded and primed DNAs and has weak ATPase activity that is stimulated the presence of primed DNA, replication protein A (RPA) and proliferating cell nuclear antigen (PCNA). The CTF18-RFC complex catalyzes the ATP-dependent loading of PCNA onto primed and gapped DNA. It also interacts with and stimulates POLH, which is suggestive of a protein network that coordinates DNA repair, recombination and chromosome cohesion reactions with replication fork progression. The sequence is that of Chromosome transmission fidelity protein 8 homolog from Homo sapiens (Human).